A 591-amino-acid chain; its full sequence is Alternative cytochrome c oxidase subunit 1 (591 aa).

Residues 40 to 60 (VIAIQYSLTASAIGLVALVLS) form a helical membrane-spanning segment. Residue His-88 participates in heme b binding. 11 consecutive transmembrane segments (helical) span residues 90 to 110 (MIMVIYLLTALFLGGFGNYLI), 126 to 146 (MLSYWVYLLAVLVLASAFFVP), 172 to 192 (GIVLMLSSLILFIIGFTMGGL), 215 to 235 (VWGIFTATVMALLAFPALFVG), 274 to 294 (LFWFFGHPEVYIVALPAFGIV), 313 to 333 (VWAIVAIGALSFVVWAHHMYV), 337 to 357 (YPYFGFFFATTTLIIAIPTAI), 377 to 397 (MLFALGFIITFVNGGLTGLFL), 412 to 432 (VVAHFHMVMGVAPIMVVLGAI), 453 to 473 (FWVTFLGAYLIFFPMHYLGLL), and 498 to 518 (FITVVALTVGFAQMVFLFNLV). Cu cation is bound by residues His-280, Tyr-284, His-329, and His-330. Positions 280 to 284 (HPEVY) form a cross-link, 1'-histidyl-3'-tyrosine (His-Tyr). Positions 415 and 417 each coordinate heme b.

It belongs to the heme-copper respiratory oxidase family. In terms of assembly, this alternate cytochrome c oxidase consists of a subunit I and two cytochromes c. Equivalents to subunit 2 and 3 are not present in this complex.

The protein localises to the cell membrane. The catalysed reaction is 4 Fe(II)-[cytochrome c] + O2 + 8 H(+)(in) = 4 Fe(III)-[cytochrome c] + 2 H2O + 4 H(+)(out). Functionally, cytochrome c oxidase is the component of the respiratory chain that catalyzes the reduction of oxygen to water. Subunits 1-3 form the functional core of the enzyme complex. Co I is the catalytic subunit of the enzyme. Electrons originating in cytochrome c are transferred via the copper A center of subunit 2 and a low-spin heme of subunit 1 to the bimetallic center formed by a high-spin heme and copper B. The chain is Alternative cytochrome c oxidase subunit 1 (coxN) from Bradyrhizobium diazoefficiens (strain JCM 10833 / BCRC 13528 / IAM 13628 / NBRC 14792 / USDA 110).